We begin with the raw amino-acid sequence, 428 residues long: Serine--tRNA ligase (428 aa).

Residue 235–237 (TAE) participates in L-serine binding. 266–268 (RSE) contributes to the ATP binding site. E289 contacts L-serine. 353 to 356 (EISS) contacts ATP. S389 serves as a coordination point for L-serine.

This sequence belongs to the class-II aminoacyl-tRNA synthetase family. Type-1 seryl-tRNA synthetase subfamily. In terms of assembly, homodimer. The tRNA molecule binds across the dimer.

The protein localises to the cytoplasm. The enzyme catalyses tRNA(Ser) + L-serine + ATP = L-seryl-tRNA(Ser) + AMP + diphosphate + H(+). The catalysed reaction is tRNA(Sec) + L-serine + ATP = L-seryl-tRNA(Sec) + AMP + diphosphate + H(+). It functions in the pathway aminoacyl-tRNA biosynthesis; selenocysteinyl-tRNA(Sec) biosynthesis; L-seryl-tRNA(Sec) from L-serine and tRNA(Sec): step 1/1. Its function is as follows. Catalyzes the attachment of serine to tRNA(Ser). Is also able to aminoacylate tRNA(Sec) with serine, to form the misacylated tRNA L-seryl-tRNA(Sec), which will be further converted into selenocysteinyl-tRNA(Sec). The chain is Serine--tRNA ligase from Shewanella denitrificans (strain OS217 / ATCC BAA-1090 / DSM 15013).